A 274-amino-acid polypeptide reads, in one-letter code: Large ribosomal subunit protein uL2 (274 aa).

The tract at residues 224 to 274 (VAMNPVDHPHGGGEGRTSGGRHPVTPWGIPTKGYKTRRNKRSNKLIVQKRK) is disordered. A compositionally biased stretch (basic residues) spans 257–274 (YKTRRNKRSNKLIVQKRK).

This sequence belongs to the universal ribosomal protein uL2 family. Part of the 50S ribosomal subunit. Forms a bridge to the 30S subunit in the 70S ribosome.

Functionally, one of the primary rRNA binding proteins. Required for association of the 30S and 50S subunits to form the 70S ribosome, for tRNA binding and peptide bond formation. It has been suggested to have peptidyltransferase activity; this is somewhat controversial. Makes several contacts with the 16S rRNA in the 70S ribosome. The chain is Large ribosomal subunit protein uL2 from Francisella tularensis subsp. mediasiatica (strain FSC147).